The chain runs to 391 residues: 23S rRNA (uracil(747)-C(5))-methyltransferase RlmC (391 aa).

Cys-5, Cys-13, Cys-16, and Cys-95 together coordinate [4Fe-4S] cluster. Positions 220, 249, 276, and 322 each coordinate S-adenosyl-L-methionine. Cys-349 functions as the Nucleophile in the catalytic mechanism.

This sequence belongs to the class I-like SAM-binding methyltransferase superfamily. RNA M5U methyltransferase family. RlmC subfamily.

The catalysed reaction is uridine(747) in 23S rRNA + S-adenosyl-L-methionine = 5-methyluridine(747) in 23S rRNA + S-adenosyl-L-homocysteine + H(+). Catalyzes the formation of 5-methyl-uridine at position 747 (m5U747) in 23S rRNA. The sequence is that of 23S rRNA (uracil(747)-C(5))-methyltransferase RlmC from Actinobacillus pleuropneumoniae serotype 3 (strain JL03).